Here is a 502-residue protein sequence, read N- to C-terminus: Cytochrome P450 monooxygenase verC (502 aa).

The chain crosses the membrane as a helical span at residues 9-29 (IAALPMVSLLGAALIVVSVLG). 4 N-linked (GlcNAc...) asparagine glycosylation sites follow: Asn124, Asn190, Asn271, and Asn342. Cys444 contacts heme.

This sequence belongs to the cytochrome P450 family. It depends on heme as a cofactor.

Its subcellular location is the membrane. The protein operates within mycotoxin biosynthesis. Its function is as follows. Cytochrome P450 monooxygenase; part of the gene cluster that mediates the biosynthesis of 11'-deoxyverticillin A, one of the dimeric epipolythiodioxopiperazines (ETPs) from the verticillin family that act as mycotoxins. 11'-deoxyverticillin A is required for normal conidiation. The nonribosomal peptide synthetase verP is speculated to be responsible for condensation of amino acids to form the carbon skeleton of verticillin, whereas the cluster-specific tailoring enzymes are involved in further modifications leading to the production of 11'-deoxyverticillin A. In Clonostachys rogersoniana, this protein is Cytochrome P450 monooxygenase verC.